The sequence spans 286 residues: 33 kDa chaperonin (286 aa).

2 cysteine pairs are disulfide-bonded: C225–C227 and C258–C261.

Belongs to the HSP33 family. Under oxidizing conditions two disulfide bonds are formed involving the reactive cysteines. Under reducing conditions zinc is bound to the reactive cysteines and the protein is inactive.

It is found in the cytoplasm. In terms of biological role, redox regulated molecular chaperone. Protects both thermally unfolding and oxidatively damaged proteins from irreversible aggregation. Plays an important role in the bacterial defense system toward oxidative stress. In Shewanella sediminis (strain HAW-EB3), this protein is 33 kDa chaperonin.